A 300-amino-acid polypeptide reads, in one-letter code: NADH-cytochrome b5 reductase 2 (300 aa).

Residues 12–29 traverse the membrane as a helical segment; the sequence is FVYPLVGATIGSIGLAYY. One can recognise an FAD-binding FR-type domain in the interval 49–153; the sequence is DQWIDLKLKK…KGPVVKWKWE (105 aa). 156-191 is a binding site for FAD; that stretch reads QFKSIALIGGGTGITPLYQLLREITSNPEDKTKVSL.

This sequence belongs to the flavoprotein pyridine nucleotide cytochrome reductase family. It depends on FAD as a cofactor.

It is found in the mitochondrion outer membrane. The enzyme catalyses 2 Fe(III)-[cytochrome b5] + NADH = 2 Fe(II)-[cytochrome b5] + NAD(+) + H(+). May mediate the reduction of outer membrane cytochrome b5. The protein is NADH-cytochrome b5 reductase 2 (MCR1) of Lodderomyces elongisporus (strain ATCC 11503 / CBS 2605 / JCM 1781 / NBRC 1676 / NRRL YB-4239) (Yeast).